The primary structure comprises 330 residues: Free fatty acid receptor 2 (330 aa).

The Extracellular segment spans residues 1 to 12; that stretch reads MLPDWKSSLILM. Residues 13–33 form a helical membrane-spanning segment; sequence AYIIIFLTGLPANLLALRAFV. Topologically, residues 34-41 are cytoplasmic; the sequence is GRIRQPQP. The chain crosses the membrane as a helical span at residues 42-62; it reads APVHILLLSLTLADLLLLLLL. The Extracellular segment spans residues 63–84; sequence PFKIIEAASNFRWYLPKVVCAL. A helical transmembrane segment spans residues 85–105; the sequence is TSFGFYSSIYCSTWLLAGISI. Over 106 to 126 the chain is Cytoplasmic; the sequence is ERYLGVAFPVQYKLSRRPLYG. Residues 127-147 form a helical membrane-spanning segment; that stretch reads VIAALVAWVMSFGHCTIVIIV. Over 148–173 the chain is Extracellular; sequence QYLNTTEQVRSGNEITCYENFTDNQL. N-linked (GlcNAc...) asparagine glycans are attached at residues asparagine 151 and asparagine 167. The chain crosses the membrane as a helical span at residues 174 to 194; sequence DVVLPVRLELCLVLFFIPMAV. Topologically, residues 195–219 are cytoplasmic; sequence TIFCYWRFVWIMLSQPLVGAQRRRR. A helical membrane pass occupies residues 220–240; sequence AVGLAVVTLLNFLVCFGPYNV. At 241 to 255 the chain is on the extracellular side; sequence SHLVGYHQRKSPWWR. The helical transmembrane segment at 256 to 276 threads the bilayer; sequence SIAVVFSSLNASLDPLLFYFS. Residues 277–330 are Cytoplasmic-facing; the sequence is SSVVRRAFGRGLQVLRNQGSSLLGRRGKDTAEGTNEDRGVGQGEGMPSSDFTTE. Positions 299–330 are disordered; it reads LGRRGKDTAEGTNEDRGVGQGEGMPSSDFTTE. The span at 302-315 shows a compositional bias: basic and acidic residues; the sequence is RGKDTAEGTNEDRG.

The protein belongs to the G-protein coupled receptor 1 family. As to quaternary structure, interacts with FCN1 (via Fibrinogen C-terminal domain). In terms of tissue distribution, expressed at relatively high levels in peripheral blood leukocytes and, to lesser extent, in spleen.

The protein localises to the cell membrane. G protein-coupled receptor that is activated by a major product of dietary fiber digestion, the short chain fatty acids (SCFAs), and that plays a role in the regulation of whole-body energy homeostasis and in intestinal immunity. In omnivorous mammals, the short chain fatty acids acetate, propionate and butyrate are produced primarily by the gut microbiome that metabolizes dietary fibers. SCFAs serve as a source of energy but also act as signaling molecules. That G protein-coupled receptor is probably coupled to the pertussis toxin-sensitive, G(i/o)-alpha family of G proteins but also to the Gq family. Its activation results in the formation of inositol 1,4,5-trisphosphate, the mobilization of intracellular calcium, the phosphorylation of the MAPK3/ERK1 and MAPK1/ERK2 kinases and the inhibition of intracellular cAMP accumulation. May play a role in glucose homeostasis by regulating the secretion of GLP-1, in response to short-chain fatty acids accumulating in the intestine. May also regulate the production of LEP/Leptin, a hormone acting on the central nervous system to inhibit food intake. Finally, may also regulate whole-body energy homeostasis through adipogenesis regulating both differentiation and lipid storage of adipocytes. In parallel to its role in energy homeostasis, may also mediate the activation of the inflammatory and immune responses by SCFA in the intestine, regulating the rapid production of chemokines and cytokines. May also play a role in the resolution of the inflammatory response and control chemotaxis in neutrophils. In addition to SCFAs, may also be activated by the extracellular lectin FCN1 in a process leading to activation of monocytes and inducing the secretion of interleukin-8/IL-8 in response to the presence of microbes. Among SCFAs, the fatty acids containing less than 6 carbons, the most potent activators are probably acetate, propionate and butyrate. Exhibits a SCFA-independent constitutive G protein-coupled receptor activity. The chain is Free fatty acid receptor 2 (FFAR2) from Homo sapiens (Human).